Here is a 97-residue protein sequence, read N- to C-terminus: Co-chaperonin GroES (97 aa).

It belongs to the GroES chaperonin family. In terms of assembly, heptamer of 7 subunits arranged in a ring. Interacts with the chaperonin GroEL.

The protein localises to the cytoplasm. Together with the chaperonin GroEL, plays an essential role in assisting protein folding. The GroEL-GroES system forms a nano-cage that allows encapsulation of the non-native substrate proteins and provides a physical environment optimized to promote and accelerate protein folding. GroES binds to the apical surface of the GroEL ring, thereby capping the opening of the GroEL channel. This is Co-chaperonin GroES from Proteus mirabilis (strain HI4320).